Here is a 546-residue protein sequence, read N- to C-terminus: Chaperonin GroEL 4 (546 aa).

ATP-binding positions include 30–33, lysine 51, 87–91, glycine 415, and aspartate 496; these read TLGP and DGTTT.

The protein belongs to the chaperonin (HSP60) family. Forms a cylinder of 14 subunits composed of two heptameric rings stacked back-to-back. Interacts with the co-chaperonin GroES.

It is found in the cytoplasm. The enzyme catalyses ATP + H2O + a folded polypeptide = ADP + phosphate + an unfolded polypeptide.. Functionally, together with its co-chaperonin GroES, plays an essential role in assisting protein folding. The GroEL-GroES system forms a nano-cage that allows encapsulation of the non-native substrate proteins and provides a physical environment optimized to promote and accelerate protein folding. This is Chaperonin GroEL 4 from Bradyrhizobium sp. (strain BTAi1 / ATCC BAA-1182).